The primary structure comprises 118 residues: Thioredoxin H5 (118 aa).

Residue A2 is modified to N-acetylalanine. One can recognise a Thioredoxin domain in the interval 2–113 (AGEGEVIACH…INEKLMKHGG (112 aa)). Active-site nucleophile residues include C39 and C42. C39 and C42 are joined by a disulfide.

This sequence belongs to the thioredoxin family. Plant H-type subfamily. In terms of assembly, interacts with MDH1.

Its subcellular location is the cytoplasm. Thiol-disulfide oxidoreductase involved in response to pathogens and oxidative stresses. Required for the response to victorin, a phytotoxin which induces programmed cell death in sensitive plants. Possesses insulin disulfide bonds reducing activity. This is Thioredoxin H5 (TRX5) from Arabidopsis thaliana (Mouse-ear cress).